Consider the following 513-residue polypeptide: Histidine ammonia-lyase (513 aa).

Residues 144–146 (ASG) constitute a cross-link (5-imidazolinone (Ala-Gly)). The residue at position 145 (serine 145) is a 2,3-didehydroalanine (Ser).

This sequence belongs to the PAL/histidase family. Post-translationally, contains an active site 4-methylidene-imidazol-5-one (MIO), which is formed autocatalytically by cyclization and dehydration of residues Ala-Ser-Gly.

Its subcellular location is the cytoplasm. The enzyme catalyses L-histidine = trans-urocanate + NH4(+). The protein operates within amino-acid degradation; L-histidine degradation into L-glutamate; N-formimidoyl-L-glutamate from L-histidine: step 1/3. This is Histidine ammonia-lyase from Streptococcus pyogenes serotype M1.